Here is a 308-residue protein sequence, read N- to C-terminus: Phenylcoumaran benzylic ether reductase TP7 (308 aa).

Residues 11 to 17 (GGTGYIG), arginine 36, and lysine 45 each bind NADP(+). The active-site Proton acceptor is lysine 133. Residue arginine 137 participates in NADP(+) binding.

This sequence belongs to the NmrA-type oxidoreductase family. Isoflavone reductase subfamily. As to expression, expressed in flowers. Expressed at low levels in stems.

It catalyses the reaction (-)-dehydrodiconiferyl alcohol + NADPH + H(+) = (S)-isodihydrodehydrodiconiferyl alcohol + NADP(+). The enzyme catalyses (+)-dehydrodiconiferyl alcohol + NADPH + H(+) = (R)-isodihydrodehydrodiconiferyl alcohol + NADP(+). The catalysed reaction is (2R,3S)-dihydrodehydrodiconiferyl alcohol + NADPH + H(+) = (S)-tetrahydrodehydrodiconiferyl alcohol + NADP(+). It carries out the reaction (2S,3R)-dihydrodehydrodiconiferyl alcohol + NADPH + H(+) = (R)-tetrahydrodehydrodiconiferyl alcohol + NADP(+). Functionally, oxidoreductase involved in lignan biosynthesis. Catalyzes the NADPH-dependent reduction of phenylcoumaran benzylic ethers. Converts dehydrodiconiferyl alcohol (DDC) to isodihydrodehydrodiconiferyl alcohol (IDDDC), and dihydrodehydrodiconiferyl alcohol (DDDC) to tetrahydrodehydrodiconiferyl alcohol (TDDC). This is Phenylcoumaran benzylic ether reductase TP7 from Nicotiana tabacum (Common tobacco).